We begin with the raw amino-acid sequence, 184 residues long: UPF0398 protein BAA_1648 (184 aa).

Belongs to the UPF0398 family.

This Bacillus anthracis (strain A0248) protein is UPF0398 protein BAA_1648.